Consider the following 343-residue polypeptide: Dimethyladenosine transferase 1, mitochondrial (343 aa).

A mitochondrion-targeting transit peptide spans 1–27 (MAASGKLSTWRLPPLPTIREIIKLLRV). 7 residues coordinate S-adenosyl-L-methionine: leucine 38, glycine 63, glutamate 85, lysine 86, aspartate 111, valine 112, and asparagine 141.

It belongs to the class I-like SAM-binding methyltransferase superfamily. rRNA adenine N(6)-methyltransferase family. KsgA subfamily. Interacts with mitochondrial RNA polymerase POLRMT. Interacts with TFAM. Bound to the maturing mtSSU until the late stages of assembly.

The protein localises to the mitochondrion. It catalyses the reaction adenosine(N)/adenosine(N+1) in rRNA + 4 S-adenosyl-L-methionine = N(6)-dimethyladenosine(N)/N(6)-dimethyladenosine(N+1) in rRNA + 4 S-adenosyl-L-homocysteine + 4 H(+). In terms of biological role, S-adenosyl-L-methionine-dependent methyltransferase which specifically dimethylates mitochondrial 12S rRNA at the conserved stem loop. Also required for basal transcription of mitochondrial DNA, probably via its interaction with POLRMT and TFAM. Stimulates transcription independently of the methyltransferase activity. Its function is as follows. Mitochondrial methyltransferase which uses S-adenosyl methionine to dimethylate two highly conserved adjacent adenosine residues (A1583 and A1584) within the loop of helix 45 at the 3-prime end of 12S rRNA, thereby regulating the assembly or stability of the small subunit of the mitochondrial ribosome. Also required for basal transcription of mitochondrial DNA, probably via its interaction with POLRMT and TFAM. Stimulates transcription independently of the methyltransferase activity. The chain is Dimethyladenosine transferase 1, mitochondrial (TFB1M) from Pongo abelii (Sumatran orangutan).